The following is a 220-amino-acid chain: Germin-like protein subfamily 2 member 4 (220 aa).

A signal peptide spans 1–21; that stretch reads MDSRCFGFFFTLLSLNVIVLA. C31 and C46 are oxidised to a cystine. N-linked (GlcNAc...) asparagine glycans are attached at residues N51 and N69. A Cupin type-1 domain is found at 58-209; sequence FFAGIGKPAV…TFQIGTKEIE (152 aa). Positions 108, 110, 115, and 154 each coordinate Mn(2+).

Belongs to the germin family. In terms of assembly, oligomer (believed to be a pentamer but probably hexamer).

The protein localises to the secreted. Its subcellular location is the extracellular space. It is found in the apoplast. In terms of biological role, may play a role in plant defense. Probably has no oxalate oxidase activity even if the active site is conserved. This chain is Germin-like protein subfamily 2 member 4 (GLP10), found in Arabidopsis thaliana (Mouse-ear cress).